Reading from the N-terminus, the 404-residue chain is Multidrug resistance protein MdtH (404 aa).

Residues 1–12 (MSRVSQARNLGK) are Cytoplasmic-facing. A helical membrane pass occupies residues 13-33 (YFLLIDNMLVVLGFFVVFPLI). Residues 34 to 98 (SIRFVDQMGW…GFATMGIAHE (65 aa)) lie on the Periplasmic side of the membrane. The helical transmembrane segment at 99 to 116 (PWLLWFSCFLSGLGGTLF) threads the bilayer. Over 117–138 (DPPRSALVVKLIRPEQRGRFFS) the chain is Cytoplasmic. A helical membrane pass occupies residues 139-159 (LLMMQDSAGAVIGALLGSWLL). Residues 160–164 (QYDFR) are Periplasmic-facing. A helical membrane pass occupies residues 165 to 185 (LVCAMGAILFIVCAIFNAWLL). The Cytoplasmic portion of the chain corresponds to 186–213 (PAWKLSTVRTPVREGMRRVISDKRFVTY). A helical transmembrane segment spans residues 214-234 (VLTLAGYYMLAVQVMLMLPIM). Residues 235–243 (VNDVAGSPA) lie on the Periplasmic side of the membrane. Residues 244-264 (AVKWMYAIEACLSLTLLYPIA) traverse the membrane as a helical segment. The Cytoplasmic portion of the chain corresponds to 265-276 (RWSEKRFRLEHR). The helical transmembrane segment at 277–297 (LMAGLLIMSLSMIPIGLAGNL) threads the bilayer. The Periplasmic portion of the chain corresponds to 298–299 (QQ). The chain crosses the membrane as a helical span at residues 300–320 (LFTLICAFYIGSVIAEPARET). Residues 321 to 339 (LSASLTDARARGSYMGFSR) lie on the Cytoplasmic side of the membrane. Residues 340 to 360 (LGLAIGGAIGYIGGGWLFDMG) form a helical membrane-spanning segment. Residues 361 to 367 (KTLAQPE) lie on the Periplasmic side of the membrane. Residues 368–388 (LPWMMLGIIGFITFLALGWQF) traverse the membrane as a helical segment. The Cytoplasmic portion of the chain corresponds to 389–404 (SHKRTPRQYTGARRLI).

It belongs to the major facilitator superfamily. DHA1 family. MdtH (TC 2.A.1.2.21) subfamily.

It localises to the cell inner membrane. The chain is Multidrug resistance protein MdtH from Salmonella arizonae (strain ATCC BAA-731 / CDC346-86 / RSK2980).